Reading from the N-terminus, the 397-residue chain is Acetyl-CoA acetyltransferase (397 aa).

The active-site Acyl-thioester intermediate is the C95. Residues Y187 and K230 each coordinate CoA. Y187 serves as a coordination point for K(+). Residues A246, G247, and A249 each contribute to the K(+) site. A CoA-binding site is contributed by S250. Residue V347 coordinates K(+). Residues H351 and C379 each act as proton acceptor in the active site.

It belongs to the thiolase-like superfamily. Thiolase family.

The protein localises to the peroxisome. The enzyme catalyses 2 acetyl-CoA = acetoacetyl-CoA + CoA. Functionally, essential for n-decane utilization. The sequence is that of Acetyl-CoA acetyltransferase (PAT1) from Yarrowia lipolytica (strain CLIB 122 / E 150) (Yeast).